The primary structure comprises 593 residues: Arginine--tRNA ligase (593 aa).

Positions 138-148 (ANPTGPLHVGH) match the 'HIGH' region motif.

The protein belongs to the class-I aminoacyl-tRNA synthetase family. In terms of assembly, monomer.

The protein resides in the cytoplasm. It carries out the reaction tRNA(Arg) + L-arginine + ATP = L-arginyl-tRNA(Arg) + AMP + diphosphate. This chain is Arginine--tRNA ligase, found in Burkholderia vietnamiensis (strain G4 / LMG 22486) (Burkholderia cepacia (strain R1808)).